The following is a 112-amino-acid chain: Ribonuclease P protein component (112 aa).

Belongs to the RnpA family. Consists of a catalytic RNA component (M1 or rnpB) and a protein subunit.

The catalysed reaction is Endonucleolytic cleavage of RNA, removing 5'-extranucleotides from tRNA precursor.. Its function is as follows. RNaseP catalyzes the removal of the 5'-leader sequence from pre-tRNA to produce the mature 5'-terminus. It can also cleave other RNA substrates such as 4.5S RNA. The protein component plays an auxiliary but essential role in vivo by binding to the 5'-leader sequence and broadening the substrate specificity of the ribozyme. This is Ribonuclease P protein component from Mycoplasmopsis synoviae (strain 53) (Mycoplasma synoviae).